Reading from the N-terminus, the 461-residue chain is Methylthioribose transporter (461 aa).

The next 12 membrane-spanning stretches (helical) occupy residues 33 to 53 (LLGI…TVAA), 56 to 76 (AGPA…LAAF), 102 to 122 (LLAF…LSAV), 152 to 172 (MAGA…TAIV), 185 to 205 (VIVL…IGYV), 213 to 233 (FMPF…FAYL), 254 to 274 (VGII…SLVL), 301 to 321 (VAGI…LALL), 355 to 375 (TWLT…GTLA), 376 to 396 (HLVN…VIVL), 409 to 429 (VPFV…FMYS), and 432 to 452 (GVTW…YFLY).

Belongs to the amino acid-polyamine-organocation (APC) superfamily.

It localises to the cell membrane. Functionally, involved in import of methylthioribose (MTR) into the cell. The sequence is that of Methylthioribose transporter from Bacillus subtilis (strain 168).